The primary structure comprises 161 residues: Anaerobic nitrite reductase HB2 (161 aa).

The Globin domain maps to 5–154 (VFTEKQEALV…LALAIKAEMK (150 aa)). The short motif at 38–42 (EIAPA) is the Homodimerization element. Residues Ser48, Lys62, His66, and His101 each coordinate heme b. The Homodimerization motif lies at 108 to 120 (DPHFEVVKEALVR).

This sequence belongs to the plant globin family. In terms of assembly, homodimer. It depends on heme b as a cofactor.

The protein resides in the cytoplasm. The protein localises to the nucleus. It catalyses the reaction Fe(III)-heme b-[protein] + nitric oxide + H2O = Fe(II)-heme b-[protein] + nitrite + 2 H(+). Phytoglobin that reduces nitrite to nitric oxide (NO) under anoxic conditions (e.g. during flooding or in waterlogged soil). May not function as an oxygen storage or transport protein. Has an unusually high affinity for O(2) through an hexacoordinate heme iron because of a very low dissociation constant. The protein is Anaerobic nitrite reductase HB2 of Brassica napus (Rape).